Reading from the N-terminus, the 210-residue chain is Scoloptoxin SSD558 (210 aa).

Positions 1–23 (MNILLPSTLFVLLMFQIIGSGMG) are cleaved as a signal peptide.

Post-translationally, contains 3 disulfide bonds. As to expression, expressed by the venom gland.

The protein localises to the secreted. The chain is Scoloptoxin SSD558 from Scolopendra dehaani (Thai centipede).